Reading from the N-terminus, the 199-residue chain is Peroxiredoxin-1 (199 aa).

A Thioredoxin domain is found at 6 to 165 (AFIGKPAPDF…TLRLVQAFQF (160 aa)). The active-site Cysteine sulfenic acid (-SOH) intermediate is the Cys-52.

It belongs to the peroxiredoxin family. AhpC/Prx1 subfamily. Homodimer; disulfide-linked, upon oxidation. 5 homodimers assemble to form a ring-like decamer. Interacts with GDPD5; forms a mixed-disulfide with GDPD5. Interacts with SESN1 and SESN2. The enzyme can be inactivated by further oxidation of the cysteine sulfenic acid (C(P)-SOH) to sulphinic acid (C(P)-SO2H) instead of its condensation to a disulfide bond. It can be reactivated by forming a transient disulfide bond with sulfiredoxin SRXN1, which reduces the cysteine sulfinic acid in an ATP- and Mg-dependent manner.

The protein resides in the cytoplasm. It carries out the reaction a hydroperoxide + [thioredoxin]-dithiol = an alcohol + [thioredoxin]-disulfide + H2O. In terms of biological role, thiol-specific peroxidase that catalyzes the reduction of hydrogen peroxide and organic hydroperoxides to water and alcohols, respectively. Plays a role in cell protection against oxidative stress by detoxifying peroxides and as sensor of hydrogen peroxide-mediated signaling events. Might participate in the signaling cascades of growth factors and tumor necrosis factor-alpha by regulating the intracellular concentrations of H(2)O(2). Reduces an intramolecular disulfide bond in GDPD5 that gates the ability to GDPD5 to drive postmitotic motor neuron differentiation. This Gallus gallus (Chicken) protein is Peroxiredoxin-1 (PRDX1).